Here is a 107-residue protein sequence, read N- to C-terminus: MVRRTLLQAALRAWVIQCWWRSMQAKMLEQRRRLALRLYTCQEWAVVKVQAQVRMWQARRRFLQARQAACIIQSHWRWHASQTRGLIRGHYEVRASRLELDIEILMT.

Positions 42–71 (QEWAVVKVQAQVRMWQARRRFLQARQAACI) constitute an IQ domain.

The polypeptide is IQ domain-containing protein F6 (IQCF6) (Homo sapiens (Human)).